The sequence spans 258 residues: Phosphatidylglycerol--prolipoprotein diacylglyceryl transferase (258 aa).

7 helical membrane-spanning segments follow: residues 9 to 29, 53 to 73, 90 to 110, 117 to 139, 169 to 189, 198 to 218, and 230 to 250; these read ILIQ…ATGF, LLTY…TLIY, EGGL…WLFV, KFLW…IRLG, PVQL…LMLF, GFLF…IEYF, and LISV…VLML. Arg137 serves as a coordination point for a 1,2-diacyl-sn-glycero-3-phospho-(1'-sn-glycerol).

This sequence belongs to the Lgt family.

The protein localises to the cell inner membrane. The catalysed reaction is L-cysteinyl-[prolipoprotein] + a 1,2-diacyl-sn-glycero-3-phospho-(1'-sn-glycerol) = an S-1,2-diacyl-sn-glyceryl-L-cysteinyl-[prolipoprotein] + sn-glycerol 1-phosphate + H(+). It functions in the pathway protein modification; lipoprotein biosynthesis (diacylglyceryl transfer). Catalyzes the transfer of the diacylglyceryl group from phosphatidylglycerol to the sulfhydryl group of the N-terminal cysteine of a prolipoprotein, the first step in the formation of mature lipoproteins. The chain is Phosphatidylglycerol--prolipoprotein diacylglyceryl transferase from Tolumonas auensis (strain DSM 9187 / NBRC 110442 / TA 4).